Consider the following 390-residue polypeptide: Phosphoglycerate kinase (390 aa).

Substrate is bound by residues 19–21 (DYN), R34, 57–60 (HLGR), R115, and R148. ATP contacts are provided by residues K198, G289, E320, and 347 to 350 (GGDS).

The protein belongs to the phosphoglycerate kinase family. As to quaternary structure, monomer.

The protein localises to the cytoplasm. The catalysed reaction is (2R)-3-phosphoglycerate + ATP = (2R)-3-phospho-glyceroyl phosphate + ADP. It functions in the pathway carbohydrate degradation; glycolysis; pyruvate from D-glyceraldehyde 3-phosphate: step 2/5. This chain is Phosphoglycerate kinase, found in Thermus thermophilus (strain ATCC BAA-163 / DSM 7039 / HB27).